A 287-amino-acid polypeptide reads, in one-letter code: Acetyl-coenzyme A carboxylase carboxyl transferase subunit beta (287 aa).

The CoA carboxyltransferase N-terminal domain maps to 28–287 (LWKKCPKCEN…ILSLLTNKVA (260 aa)). 4 residues coordinate Zn(2+): C32, C35, C51, and C54. The C4-type zinc-finger motif lies at 32–54 (CPKCENVLYRPELEKNLDVCPKC).

Belongs to the AccD/PCCB family. As to quaternary structure, acetyl-CoA carboxylase is a heterohexamer composed of biotin carboxyl carrier protein (AccB), biotin carboxylase (AccC) and two subunits each of ACCase subunit alpha (AccA) and ACCase subunit beta (AccD). Requires Zn(2+) as cofactor.

Its subcellular location is the cytoplasm. It carries out the reaction N(6)-carboxybiotinyl-L-lysyl-[protein] + acetyl-CoA = N(6)-biotinyl-L-lysyl-[protein] + malonyl-CoA. Its pathway is lipid metabolism; malonyl-CoA biosynthesis; malonyl-CoA from acetyl-CoA: step 1/1. In terms of biological role, component of the acetyl coenzyme A carboxylase (ACC) complex. Biotin carboxylase (BC) catalyzes the carboxylation of biotin on its carrier protein (BCCP) and then the CO(2) group is transferred by the transcarboxylase to acetyl-CoA to form malonyl-CoA. This is Acetyl-coenzyme A carboxylase carboxyl transferase subunit beta from Marinomonas sp. (strain MWYL1).